Here is a 98-residue protein sequence, read N- to C-terminus: NADH-ubiquinone oxidoreductase chain 4L (98 aa).

The next 3 helical transmembrane spans lie at 1–21, 26–46, and 59–79; these read MASIYLNLMMAFLLALSGVLI, LMSTLLCLEGMMLSLFIMMTL, and APLILLVFSACEAGIGLALLV.

Belongs to the complex I subunit 4L family. As to quaternary structure, core subunit of respiratory chain NADH dehydrogenase (Complex I) which is composed of 45 different subunits.

It is found in the mitochondrion inner membrane. It catalyses the reaction a ubiquinone + NADH + 5 H(+)(in) = a ubiquinol + NAD(+) + 4 H(+)(out). In terms of biological role, core subunit of the mitochondrial membrane respiratory chain NADH dehydrogenase (Complex I) which catalyzes electron transfer from NADH through the respiratory chain, using ubiquinone as an electron acceptor. Part of the enzyme membrane arm which is embedded in the lipid bilayer and involved in proton translocation. This Caenolestes fuliginosus (Shrew opossum) protein is NADH-ubiquinone oxidoreductase chain 4L (MT-ND4L).